Here is a 288-residue protein sequence, read N- to C-terminus: Bifunctional protein FolD (288 aa).

NADP(+)-binding positions include 165-167 (GRS) and Ser190.

It belongs to the tetrahydrofolate dehydrogenase/cyclohydrolase family. As to quaternary structure, homodimer.

The catalysed reaction is (6R)-5,10-methylene-5,6,7,8-tetrahydrofolate + NADP(+) = (6R)-5,10-methenyltetrahydrofolate + NADPH. It catalyses the reaction (6R)-5,10-methenyltetrahydrofolate + H2O = (6R)-10-formyltetrahydrofolate + H(+). It participates in one-carbon metabolism; tetrahydrofolate interconversion. In terms of biological role, catalyzes the oxidation of 5,10-methylenetetrahydrofolate to 5,10-methenyltetrahydrofolate and then the hydrolysis of 5,10-methenyltetrahydrofolate to 10-formyltetrahydrofolate. The sequence is that of Bifunctional protein FolD from Bdellovibrio bacteriovorus (strain ATCC 15356 / DSM 50701 / NCIMB 9529 / HD100).